The sequence spans 350 residues: Ribosomal RNA large subunit methyltransferase Cfr (350 aa).

The active-site Proton acceptor is the E92. The 235-residue stretch at 99-333 (EAGWESFCIS…VTIRSQFGRE (235 aa)) folds into the Radical SAM core domain. Residues C106 and C338 are joined by a disulfide bond. [4Fe-4S] cluster is bound by residues C113, C117, and C120. S-adenosyl-L-methionine-binding positions include 159–160 (GE), S190, 213–215 (SLH), and N293. Catalysis depends on C338, which acts as the S-methylcysteine intermediate.

This sequence belongs to the radical SAM superfamily. RlmN family. Cfr subfamily. The cofactor is [4Fe-4S] cluster.

It localises to the cytoplasm. It catalyses the reaction adenosine(2503) in 23S rRNA + 2 reduced [2Fe-2S]-[ferredoxin] + 2 S-adenosyl-L-methionine = 8-methyladenosine(2503) in 23S rRNA + 5'-deoxyadenosine + L-methionine + 2 oxidized [2Fe-2S]-[ferredoxin] + S-adenosyl-L-homocysteine. Functionally, specifically methylates position 8 of adenine 2503 in 23S rRNA. Confers resistance to some classes of antibiotics. In Shouchella clausii (strain KSM-K16) (Alkalihalobacillus clausii), this protein is Ribosomal RNA large subunit methyltransferase Cfr.